We begin with the raw amino-acid sequence, 316 residues long: Haloacid dehalogenase-like hydrolase domain-containing protein At4g39970 (316 aa).

The transit peptide at 1–46 (MAVSCNHSAILFSPSSTAGSSSVTSSSSLIGFPRFQTLRFKSRSVY) directs the protein to the chloroplast. Asp69 serves as the catalytic Nucleophile. 3 residues coordinate Mg(2+): Asp69, Asp71, and Asp259. The active-site Proton donor is Asp71.

It belongs to the HAD-like hydrolase superfamily. DOG/GPP family. Requires Mg(2+) as cofactor.

The protein resides in the plastid. The protein localises to the chloroplast. This chain is Haloacid dehalogenase-like hydrolase domain-containing protein At4g39970, found in Arabidopsis thaliana (Mouse-ear cress).